Consider the following 154-residue polypeptide: MVKAVAVVRGDSNVKGTVIFEQESESAPTTITYDISGNDPNAKRGFHIHTFGDNTNGCTSAGPHFNPHGTTHGDRTAEVRHVGDLGNIETDAQGNAKGTVTDNLVKLIGPESVIGRTVVVHAGTDDLGKGGNEESLKTGNAGPRPACGVIGISQ.

Residues H47, H49, and H64 each coordinate Cu cation. C58 and C147 are disulfide-bonded. H64, H72, H81, and D84 together coordinate Zn(2+). H121 serves as a coordination point for Cu cation. The span at 125-136 (DDLGKGGNEESL) shows a compositional bias: basic and acidic residues. The disordered stretch occupies residues 125 to 144 (DDLGKGGNEESLKTGNAGPR). R144 serves as a coordination point for substrate.

It belongs to the Cu-Zn superoxide dismutase family. Homodimer. Cu cation is required as a cofactor. It depends on Zn(2+) as a cofactor.

The protein resides in the cytoplasm. It carries out the reaction 2 superoxide + 2 H(+) = H2O2 + O2. Functionally, destroys radicals which are normally produced within the cells and which are toxic to biological systems. The chain is Superoxide dismutase [Cu-Zn] (sod-1) from Neurospora crassa (strain ATCC 24698 / 74-OR23-1A / CBS 708.71 / DSM 1257 / FGSC 987).